Reading from the N-terminus, the 115-residue chain is Somatostatin-1 (115 aa).

The first 24 residues, 1–24 (MQSCRVQCALTLLSLALAINSISA), serve as a signal peptide directing secretion. A propeptide spanning residues 25–99 (APTDPRLRQF…NSSPALAPRE (75 aa)) is cleaved from the precursor. The interval 60-79 (SQTDNEALESDDLPRGAEQD) is disordered. Residues Cys104 and Cys115 are joined by a disulfide bond.

It belongs to the somatostatin family.

It is found in the secreted. Functionally, somatostatin inhibits the release of somatotropin. The chain is Somatostatin-1 (sst1) from Pelophylax ridibundus (Marsh frog).